Here is a 374-residue protein sequence, read N- to C-terminus: Arrestin domain-containing protein 15 (374 aa).

A disordered region spans residues 344 to 374 (HHLNRSKAKVSKTEQQQRKTRNIVEENPYFR).

This sequence belongs to the arrestin family.

This Caenorhabditis elegans protein is Arrestin domain-containing protein 15 (arrd-15).